We begin with the raw amino-acid sequence, 174 residues long: Protein C (174 aa).

The protein belongs to the morbillivirus protein C family.

The polypeptide is Protein C (P/V/C) (Canine distemper virus (strain Onderstepoort) (CDV)).